The primary structure comprises 435 residues: Succinate--CoA ligase [ADP-forming] subunit beta, mitochondrial (435 aa).

A mitochondrion-targeting transit peptide spans 1 to 20 (MIGRISQPLLNTSQKFMAPA). The ATP-grasp domain maps to 32-259 (MKILQNYEIK…SNAEFRQAKL (228 aa)). Residues Lys69 and 76 to 78 (GRG) contribute to the ATP site. Mg(2+) is bound by residues Asn229 and Asp243. Residues Asn294 and 352–354 (GIM) contribute to the substrate site.

It belongs to the succinate/malate CoA ligase beta subunit family. ATP-specific subunit beta subfamily. As to quaternary structure, heterodimer of an alpha and a beta subunit. The beta subunit determines specificity for ATP. Mg(2+) serves as cofactor.

It is found in the mitochondrion. The catalysed reaction is succinate + ATP + CoA = succinyl-CoA + ADP + phosphate. It participates in carbohydrate metabolism; tricarboxylic acid cycle; succinate from succinyl-CoA (ligase route): step 1/1. Functionally, ATP-specific succinyl-CoA synthetase functions in the citric acid cycle (TCA), coupling the hydrolysis of succinyl-CoA to the synthesis of ATP and thus represents the only step of substrate-level phosphorylation in the TCA. The beta subunit provides nucleotide specificity of the enzyme and binds the substrate succinate, while the binding sites for coenzyme A and phosphate are found in the alpha subunit. This chain is Succinate--CoA ligase [ADP-forming] subunit beta, mitochondrial, found in Caenorhabditis elegans.